The primary structure comprises 334 residues: Protein-glutamate methylesterase/protein-glutamine glutaminase 2 (334 aa).

The Response regulatory domain occupies 2–120 (NIGIVNDLPL…GAAGDTTKLL (119 aa)). A 4-aspartylphosphate modification is found at aspartate 53. A CheB-type methylesterase domain is found at 134 to 334 (PGSSRLAGAA…AGELAALARI (201 aa)). Active-site residues include serine 157, histidine 184, and aspartate 277.

The protein belongs to the CheB family. In terms of processing, phosphorylated by CheA. Phosphorylation of the N-terminal regulatory domain activates the methylesterase activity.

The protein resides in the cytoplasm. It carries out the reaction [protein]-L-glutamate 5-O-methyl ester + H2O = L-glutamyl-[protein] + methanol + H(+). The catalysed reaction is L-glutaminyl-[protein] + H2O = L-glutamyl-[protein] + NH4(+). Involved in chemotaxis. Part of a chemotaxis signal transduction system that modulates chemotaxis in response to various stimuli. Catalyzes the demethylation of specific methylglutamate residues introduced into the chemoreceptors (methyl-accepting chemotaxis proteins or MCP) by CheR. Also mediates the irreversible deamidation of specific glutamine residues to glutamic acid. The chain is Protein-glutamate methylesterase/protein-glutamine glutaminase 2 from Burkholderia orbicola (strain AU 1054).